An 871-amino-acid chain; its full sequence is Metabotropic glutamate receptor 6 (871 aa).

Residues 1-23 (MGRLPVLLLWLAWWLSQAGIACG) form the signal peptide. The Extracellular segment spans residues 24–579 (AGSVRLAGGL…VVRLTWSSPW (556 aa)). A disulfide bridge links Cys51 with Cys93. Residues Ser148, 169–171 (AST), and Tyr219 each bind L-glutamate. 7 disulfide bridges follow: Cys238–Cys530, Cys361–Cys377, Cys417–Cys424, Cys512–Cys531, Cys516–Cys534, Cys537–Cys549, and Cys552–Cys565. The N-linked (GlcNAc...) asparagine glycan is linked to Asn290. Asp301 contacts L-glutamate. Residue Lys394 participates in L-glutamate binding. 2 N-linked (GlcNAc...) asparagine glycosylation sites follow: Asn445 and Asn473. Asn561 is a glycosylation site (N-linked (GlcNAc...) asparagine). Residues 580–602 (AALPLLLAVLGIMATTTIMATFM) traverse the membrane as a helical segment. Over 603–616 (RHNDTPIVRASGRE) the chain is Cytoplasmic. A helical membrane pass occupies residues 617-637 (LSYVLLTGIFLIYAITFLMVA). Topologically, residues 638–648 (EPCAAICAARR) are extracellular. Residues 649–667 (LLLGLGTTLSYSALLTKTN) traverse the membrane as a helical segment. The Cytoplasmic portion of the chain corresponds to 668-691 (RIYRIFEQGKRSVTPPPFISPTSQ). A helical transmembrane segment spans residues 692–712 (LVITFGLTSLQVVGVIAWLGA). The Extracellular portion of the chain corresponds to 713–742 (QPPHSVIDYEEQRTVDPEQARGVLKCDMSD). A helical transmembrane segment spans residues 743 to 764 (LSLIGCLGYSLLLMVTCTVYAI). Over 765–777 (KARGVPETFNEAK) the chain is Cytoplasmic. Residues 778–800 (PIGFTMYTTCIIWLAFVPIFFGT) form a helical membrane-spanning segment. The Extracellular segment spans residues 801 to 813 (AQSAEKIYIQTTT). The helical transmembrane segment at 814–839 (LTVSLSLSASVSLGMLYVPKTYVILF) threads the bilayer. Over 840–871 (HPEQNVQKRKRSLKKTSTMAAPPQNENAEDAK) the chain is Cytoplasmic. Residues 850-871 (RSLKKTSTMAAPPQNENAEDAK) are disordered.

The protein belongs to the G-protein coupled receptor 3 family. Homodimer. Interacts with GPR179. Interacts with photoreceptor synaptic protein LRIT1 (via its N-terminal extracellular domain). In terms of tissue distribution, restricted expression in the inner nuclear layer of the retina.

The protein localises to the cell membrane. It is found in the endoplasmic reticulum membrane. Its subcellular location is the golgi apparatus membrane. The protein resides in the cell projection. It localises to the dendrite. G-protein coupled receptor for glutamate. Ligand binding causes a conformation change that triggers signaling via guanine nucleotide-binding proteins (G proteins) and modulates the activity of down-stream effectors, such as adenylate cyclase. Signaling inhibits adenylate cyclase activity. Signaling stimulates TRPM1 channel activity and Ca(2+) uptake. Required for normal vision. The sequence is that of Metabotropic glutamate receptor 6 (Grm6) from Rattus norvegicus (Rat).